The primary structure comprises 631 residues: 1-deoxy-D-xylulose-5-phosphate synthase (631 aa).

Thiamine diphosphate contacts are provided by residues His72 and 113–115 (GHA). Mg(2+) is bound at residue Asp144. Residues 145–146 (GA), Asn174, Tyr287, and Glu370 contribute to the thiamine diphosphate site. Asn174 is a Mg(2+) binding site.

This sequence belongs to the transketolase family. DXPS subfamily. Homodimer. Mg(2+) serves as cofactor. It depends on thiamine diphosphate as a cofactor.

The catalysed reaction is D-glyceraldehyde 3-phosphate + pyruvate + H(+) = 1-deoxy-D-xylulose 5-phosphate + CO2. It participates in metabolic intermediate biosynthesis; 1-deoxy-D-xylulose 5-phosphate biosynthesis; 1-deoxy-D-xylulose 5-phosphate from D-glyceraldehyde 3-phosphate and pyruvate: step 1/1. Catalyzes the acyloin condensation reaction between C atoms 2 and 3 of pyruvate and glyceraldehyde 3-phosphate to yield 1-deoxy-D-xylulose-5-phosphate (DXP). In Prochlorococcus marinus (strain MIT 9515), this protein is 1-deoxy-D-xylulose-5-phosphate synthase.